A 227-amino-acid polypeptide reads, in one-letter code: CDP-diacylglycerol--inositol 3-phosphatidyltransferase 1 (227 aa).

2 consecutive transmembrane segments (helical) span residues 12-36 (LSVY…AFAV) and 42-61 (PLFS…DGWV). Asp-55 and Asp-58 together coordinate Mg(2+). A CDP-1,2-diacyl-sn-glycerol is bound by residues Gly-59, Arg-63, and Ser-69. 4 helical membrane passes run 73–95 (AVLD…SQIY), 101–122 (FLSL…TFLA), 142–165 (YGNR…LLLI), and 177–200 (VVAT…GWSM). Mg(2+)-binding residues include Asp-76 and Asp-80. Asp-80 serves as the catalytic Proton acceptor.

It belongs to the CDP-alcohol phosphatidyltransferase class-I family. Mg(2+) serves as cofactor. Requires Mn(2+) as cofactor. Expressed in stems, flowers, shoots and roots. Present in epidermal tissues.

The protein localises to the membrane. The catalysed reaction is a CDP-1,2-diacyl-sn-glycerol + myo-inositol = a 1,2-diacyl-sn-glycero-3-phospho-(1D-myo-inositol) + CMP + H(+). Catalyzes the biosynthesis of phosphatidylinositol (PtdIns) as well as PtdIns:inositol exchange reaction. May thus act to reduce an excessive cellular PtdIns content. The exchange activity is due to the reverse reaction of PtdIns synthase and is dependent on CMP, which is tightly bound to the enzyme. In Arabidopsis thaliana (Mouse-ear cress), this protein is CDP-diacylglycerol--inositol 3-phosphatidyltransferase 1 (PIS1).